Consider the following 334-residue polypeptide: Trans-1,2-dihydrobenzene-1,2-diol dehydrogenase (334 aa).

This sequence belongs to the Gfo/Idh/MocA family. In terms of assembly, homodimer. Small intestine.

The catalysed reaction is (1R,2R)-1,2-dihydrobenzene-1,2-diol + NADP(+) = catechol + NADPH + H(+). It carries out the reaction D-xylose + NADP(+) = D-xylono-1,5-lactone + NADPH + H(+). The polypeptide is Trans-1,2-dihydrobenzene-1,2-diol dehydrogenase (DHDH) (Homo sapiens (Human)).